The chain runs to 118 residues: Small ribosomal subunit protein uS13 (118 aa).

A disordered region spans residues 94–118 (SLPLRGQRTKTNARTRKGPRKPIRK).

It belongs to the universal ribosomal protein uS13 family. As to quaternary structure, part of the 30S ribosomal subunit. Forms a loose heterodimer with protein S19. Forms two bridges to the 50S subunit in the 70S ribosome.

Its function is as follows. Located at the top of the head of the 30S subunit, it contacts several helices of the 16S rRNA. In the 70S ribosome it contacts the 23S rRNA (bridge B1a) and protein L5 of the 50S subunit (bridge B1b), connecting the 2 subunits; these bridges are implicated in subunit movement. Contacts the tRNAs in the A and P-sites. This is Small ribosomal subunit protein uS13 from Shewanella frigidimarina (strain NCIMB 400).